The following is a 311-amino-acid chain: Pyrimidine-specific ribonucleoside hydrolase RihA (311 aa).

Residue histidine 240 is part of the active site.

This sequence belongs to the IUNH family. RihA subfamily.

Hydrolyzes cytidine or uridine to ribose and cytosine or uracil, respectively. The protein is Pyrimidine-specific ribonucleoside hydrolase RihA of Salmonella arizonae (strain ATCC BAA-731 / CDC346-86 / RSK2980).